The primary structure comprises 199 residues: Urease accessory protein UreG (199 aa).

GTP is bound at residue 8–15 (GPVGSGKT).

This sequence belongs to the SIMIBI class G3E GTPase family. UreG subfamily. In terms of assembly, homodimer. UreH, UreF and UreG form a complex that acts as a GTP-hydrolysis-dependent molecular chaperone, activating the urease apoprotein by helping to assemble the nickel containing metallocenter of UreC. The UreE protein probably delivers the nickel.

It localises to the cytoplasm. Facilitates the functional incorporation of the urease nickel metallocenter. This process requires GTP hydrolysis, probably effectuated by UreG. This Helicobacter acinonychis (strain Sheeba) protein is Urease accessory protein UreG.